Here is a 441-residue protein sequence, read N- to C-terminus: Thymidine phosphorylase (441 aa).

Belongs to the thymidine/pyrimidine-nucleoside phosphorylase family. Homodimer.

The catalysed reaction is thymidine + phosphate = 2-deoxy-alpha-D-ribose 1-phosphate + thymine. Its pathway is pyrimidine metabolism; dTMP biosynthesis via salvage pathway; dTMP from thymine: step 1/2. Its function is as follows. The enzymes which catalyze the reversible phosphorolysis of pyrimidine nucleosides are involved in the degradation of these compounds and in their utilization as carbon and energy sources, or in the rescue of pyrimidine bases for nucleotide synthesis. This is Thymidine phosphorylase from Chromobacterium violaceum (strain ATCC 12472 / DSM 30191 / JCM 1249 / CCUG 213 / NBRC 12614 / NCIMB 9131 / NCTC 9757 / MK).